Here is a 237-residue protein sequence, read N- to C-terminus: Large ribosomal subunit protein uL1 (237 aa).

This sequence belongs to the universal ribosomal protein uL1 family. In terms of assembly, part of the 50S ribosomal subunit.

In terms of biological role, binds directly to 23S rRNA. The L1 stalk is quite mobile in the ribosome, and is involved in E site tRNA release. Protein L1 is also a translational repressor protein, it controls the translation of the L11 operon by binding to its mRNA. In Dehalococcoides mccartyi (strain CBDB1), this protein is Large ribosomal subunit protein uL1.